We begin with the raw amino-acid sequence, 187 residues long: Pseudo histidine-containing phosphotransfer protein 1 (187 aa).

The region spanning 74–169 (SPNFVEEVVT…AVLRQKLESY (96 aa)) is the HPt domain.

In terms of biological role, functions as a two-component phosphorelay mediator between cytokinin sensor histidine kinases and response regulators (B-type ARRs). Plays an important role in propagating cytokinin signal transduction. The sequence is that of Pseudo histidine-containing phosphotransfer protein 1 from Oryza sativa subsp. japonica (Rice).